Consider the following 231-residue polypeptide: MGHKSNPIGLRLQINRTWDSRWYAEGRNYAQMLEEDLKIRKYIVENLPQAAISKVVIERPAKLCRVSIYAARPGVIIGKKGADIEKLRSKLATMTGSDVKLNIVEIRKPEIDSKLVAQGVADQLVRRVAFRRAMKRAVQSALRLGAEGIKITCGGRLGGAEIARVEWYREGRVPLHTLRANIDYAEAEAHTAYGVIGIKVWIFKGEILGHDPMAQDRLMMEAQTSGVRPAR.

In terms of domain architecture, KH type-2 spans isoleucine 39–arginine 107.

The protein belongs to the universal ribosomal protein uS3 family. In terms of assembly, part of the 30S ribosomal subunit. Forms a tight complex with proteins S10 and S14.

Functionally, binds the lower part of the 30S subunit head. Binds mRNA in the 70S ribosome, positioning it for translation. The polypeptide is Small ribosomal subunit protein uS3 (Novosphingobium aromaticivorans (strain ATCC 700278 / DSM 12444 / CCUG 56034 / CIP 105152 / NBRC 16084 / F199)).